Consider the following 999-residue polypeptide: Helicase required for RNAi-mediated heterochromatin assembly 1 (999 aa).

The segment at 61 to 90 is disordered; the sequence is EQIETSETSKTQDSEGNKVDKNLKENKSIR. The segment covering 70 to 88 has biased composition (basic and acidic residues); it reads KTQDSEGNKVDKNLKENKS. The residue at position 94 (S94) is a Phosphoserine. The segment covering 106 to 124 has biased composition (basic and acidic residues); that stretch reads RNDITSGKNREFENEHHPA. A disordered region spans residues 106-131; that stretch reads RNDITSGKNREFENEHHPASDTSSWR. 393-400 is a binding site for ATP; that stretch reads GPPGTGKS.

Cid12, hrr1 and rdp1 interact forming the RNA-directed RNA polymerase complex (RDRC). The RDRC complex interacts with the RITS complex via interaction between ago1 and hrr1. Clr4 has a role in mediating this interaction.

Its subcellular location is the cytoplasm. The protein resides in the nucleus. It catalyses the reaction ATP + H2O = ADP + phosphate + H(+). Its function is as follows. Has a role in the RNA interference (RNAi) pathway which is important for heterochromatin formation and accurate chromosome segregation. A member of the RNA-directed RNA polymerase complex (RDRC) which is involved in the generation of small interfering RNAs (siRNAs) and mediate their association with the RNA-induced transcriptional silencing (RITS) complex. RITS acts as a priming complex for dsRNA synthesis at the site of non-coding centromeric RNA. This is Helicase required for RNAi-mediated heterochromatin assembly 1 (hrr1) from Schizosaccharomyces pombe (strain 972 / ATCC 24843) (Fission yeast).